The following is a 185-amino-acid chain: Ribosome-recycling factor (185 aa).

The disordered stretch occupies residues I139–K159. The segment covering S141–K159 has biased composition (basic and acidic residues).

Belongs to the RRF family.

The protein localises to the cytoplasm. In terms of biological role, responsible for the release of ribosomes from messenger RNA at the termination of protein biosynthesis. May increase the efficiency of translation by recycling ribosomes from one round of translation to another. The chain is Ribosome-recycling factor from Sorangium cellulosum (strain So ce56) (Polyangium cellulosum (strain So ce56)).